The primary structure comprises 815 residues: BTB/POZ domain-containing protein KCTD3 (815 aa).

The 70-residue stretch at 18–87 (EIVQLNVGGT…LRTKELDLRG (70 aa)) folds into the BTB domain. Over residues 139 to 168 (INNTVRSADSRNGLNSTEGEARGNGTQPVL) the composition is skewed to polar residues. Positions 139–170 (INNTVRSADSRNGLNSTEGEARGNGTQPVLSG) are disordered. 8 WD repeats span residues 174-218 (ETVR…GWQQ), 224-263 (YLDW…LWSV), 270-305 (SEIG…VWNA), 310-342 (WQVQ…YIDM), 354-404 (LLVT…VQHP), 412-449 (QLFQ…TWTV), 457-504 (STQP…IQKV), and 510-569 (KLFV…MWDL). An interaction with HCN3 region spans residues 512-815 (FVRLSSTGKR…SDSSGQEYSL (304 aa)). Phosphoserine is present on residues Ser-604, Ser-664, and Ser-711. Residues 736–758 (SESKKRSSEDENENKIEFRKKGG) show a composition bias toward basic and acidic residues. The interval 736-815 (SESKKRSSED…SDSSGQEYSL (80 aa)) is disordered. The segment covering 774–800 (ASSPSTSDGGTDSPGTASPSPTKTTPS) has biased composition (low complexity). At Ser-793 the chain carries Phosphoserine.

This sequence belongs to the KCTD3 family. As to quaternary structure, interacts with HCN3. Broadly expressed in normal tissues.

Its subcellular location is the cell membrane. Its function is as follows. Accessory subunit of potassium/sodium hyperpolarization-activated cyclic nucleotide-gated channel 3 (HCN3) up-regulating its cell-surface expression and current density without affecting its voltage dependence and kinetics. The protein is BTB/POZ domain-containing protein KCTD3 (KCTD3) of Homo sapiens (Human).